An 80-amino-acid polypeptide reads, in one-letter code: Omega-conotoxin-like PuIA (80 aa).

The signal sequence occupies residues 1-22 (MKLTCVMIVAVLFLTAWTFVTA). Positions 23 to 50 (DSIRALEDLFAKAPDEMENSGASPLNER) are excised as a propeptide. 3 disulfide bridges follow: C52–C70, C59–C74, and C69–C78.

It belongs to the conotoxin O1 superfamily. As to expression, expressed by the venom duct.

It localises to the secreted. Omega-conotoxins act at presynaptic membranes, they bind and block voltage-gated calcium channels (Cav). The protein is Omega-conotoxin-like PuIA of Conus pulicarius (Flea-bitten cone).